The following is a 350-amino-acid chain: Probable lactoylglutathione lyase, chloroplastic (350 aa).

Residues M1–L61 constitute a chloroplast transit peptide. 2 VOC domains span residues R88–R212 and P218–N342. Residue H91 coordinates Zn(2+). Substrate is bound at residue R95. E142 contributes to the Zn(2+) binding site. Substrate is bound by residues N146 and H160. The Zn(2+) site is built by H160 and E208. E208 (proton donor/acceptor) is an active-site residue.

It belongs to the glyoxalase I family. It depends on Zn(2+) as a cofactor.

The protein resides in the plastid. Its subcellular location is the chloroplast stroma. It carries out the reaction (R)-S-lactoylglutathione = methylglyoxal + glutathione. The protein operates within secondary metabolite metabolism; methylglyoxal degradation; (R)-lactate from methylglyoxal: step 1/2. Functionally, catalyzes the conversion of hemimercaptal, formed from methylglyoxal and glutathione, to S-lactoylglutathione. The sequence is that of Probable lactoylglutathione lyase, chloroplastic from Arabidopsis thaliana (Mouse-ear cress).